The sequence spans 466 residues: Ribulose bisphosphate carboxylase large chain (466 aa).

K5 carries the post-translational modification N6,N6,N6-trimethyllysine. 2 residues coordinate substrate: N114 and T164. K166 serves as the catalytic Proton acceptor. K168 lines the substrate pocket. 3 residues coordinate Mg(2+): K192, D194, and E195. Residue K192 is modified to N6-carboxylysine. H285 functions as the Proton acceptor in the catalytic mechanism. Substrate-binding residues include R286, H318, and S370.

Belongs to the RuBisCO large chain family. Type I subfamily. In terms of assembly, heterohexadecamer of 8 large chains and 8 small chains. The cofactor is Mg(2+).

Its subcellular location is the plastid. It is found in the chloroplast. The enzyme catalyses 2 (2R)-3-phosphoglycerate + 2 H(+) = D-ribulose 1,5-bisphosphate + CO2 + H2O. It carries out the reaction D-ribulose 1,5-bisphosphate + O2 = 2-phosphoglycolate + (2R)-3-phosphoglycerate + 2 H(+). In terms of biological role, ruBisCO catalyzes two reactions: the carboxylation of D-ribulose 1,5-bisphosphate, the primary event in carbon dioxide fixation, as well as the oxidative fragmentation of the pentose substrate in the photorespiration process. Both reactions occur simultaneously and in competition at the same active site. This Lobelia sp protein is Ribulose bisphosphate carboxylase large chain.